Here is a 386-residue protein sequence, read N- to C-terminus: Mannitol-1-phosphate 5-dehydrogenase (386 aa).

A4–G15 is an NAD(+) binding site.

It belongs to the mannitol dehydrogenase family.

The enzyme catalyses D-mannitol 1-phosphate + NAD(+) = beta-D-fructose 6-phosphate + NADH + H(+). This Oceanobacillus iheyensis (strain DSM 14371 / CIP 107618 / JCM 11309 / KCTC 3954 / HTE831) protein is Mannitol-1-phosphate 5-dehydrogenase.